We begin with the raw amino-acid sequence, 277 residues long: Indole-3-glycerol phosphate synthase (277 aa).

Belongs to the TrpC family.

The catalysed reaction is 1-(2-carboxyphenylamino)-1-deoxy-D-ribulose 5-phosphate + H(+) = (1S,2R)-1-C-(indol-3-yl)glycerol 3-phosphate + CO2 + H2O. Its pathway is amino-acid biosynthesis; L-tryptophan biosynthesis; L-tryptophan from chorismate: step 4/5. The protein is Indole-3-glycerol phosphate synthase of Pseudomonas putida (strain ATCC 700007 / DSM 6899 / JCM 31910 / BCRC 17059 / LMG 24140 / F1).